The primary structure comprises 643 residues: Very long-chain fatty acid transport protein (643 aa).

Topologically, residues 1–15 are cytoplasmic; the sequence is MACMHQAQLYNDLEE. A helical membrane pass occupies residues 16 to 36; sequence LLTGPSVPIVAGAAGAAALTA. The Extracellular portion of the chain corresponds to 37 to 138; it reads YINAKYHIAH…AIDGGNSAEH (102 aa). The helical transmembrane segment at 139-159 threads the bilayer; that stretch reads LMLWLALDAIGAATSFLNWNL. Over 160 to 249 the chain is Cytoplasmic; that stretch reads TGAGLIHCIK…TGLPKGVFIS (90 aa). 235–246 provides a ligand contact to ATP; that stretch reads YTSGTTGLPKGV. The stretch at 250 to 318 is an intramembrane region; the sequence is TGRELRTDWS…FWPEVVASEA (69 aa). Residues 319–643 are Cytoplasmic-facing; sequence NIIQYVGELG…QGIVDKRIRL (325 aa). The FACS motif lies at 477-525; that stretch reads DLWFKSGDMLRQDAEGRVYFVDRLGDTFRWKSENVSTNEVADVMGTFPQ.

The protein belongs to the ATP-dependent AMP-binding enzyme family.

The protein resides in the lipid droplet. The protein localises to the cell membrane. Its subcellular location is the peroxisome membrane. It is found in the peroxisome. The enzyme catalyses a very long-chain fatty acid + ATP + CoA = a very long-chain fatty acyl-CoA + AMP + diphosphate. Functionally, acyl-CoA synthetase required for both the import of long chain fatty acids (LCFAs) (C14-C18) and the activation very long chain fatty acids (VLCFAs) (C20-C26) by esterification of the fatty acids into metabolically active CoA-thioesters for subsequent degradation or incorporation into phospholipids. The transport and fatty acyl-CoA synthetase activities are genetically separable and are thus independent activities. Esterifies VLCFAs in the peroxisome matrix. The VLCFAs are actively transported into peroxisomes by a PXA1-PXA2 heterodimeric transporter in the peroxisomal membrane. The polypeptide is Very long-chain fatty acid transport protein (FAT1) (Cochliobolus heterostrophus (Southern corn leaf blight fungus)).